Reading from the N-terminus, the 151-residue chain is Nucleoside diphosphate kinase (151 aa).

5 residues coordinate ATP: Lys11, Phe59, Arg87, Arg104, and Asn114. The active-site Pros-phosphohistidine intermediate is His117.

It belongs to the NDK family. In terms of assembly, homotrimer. Requires Mg(2+) as cofactor.

It catalyses the reaction a 2'-deoxyribonucleoside 5'-diphosphate + ATP = a 2'-deoxyribonucleoside 5'-triphosphate + ADP. The enzyme catalyses a ribonucleoside 5'-diphosphate + ATP = a ribonucleoside 5'-triphosphate + ADP. Its function is as follows. Major role in the synthesis of nucleoside triphosphates other than ATP. The ATP gamma phosphate is transferred to the NDP beta phosphate via a ping-pong mechanism, using a phosphorylated active-site intermediate. The chain is Nucleoside diphosphate kinase (ndk1) from Schizosaccharomyces pombe (strain 972 / ATCC 24843) (Fission yeast).